The following is a 351-amino-acid chain: V-type proton ATPase subunit d2 (351 aa).

It belongs to the V-ATPase V0D/AC39 subunit family. In terms of assembly, V-ATPase is a heteromultimeric enzyme composed of a peripheral catalytic V1 complex (components A to H) attached to an integral membrane V0 proton pore complex (components: a, c, c'', d and e).

The protein localises to the vacuole membrane. Subunit of the integral membrane V0 complex of vacuolar ATPase. Vacuolar ATPase is responsible for acidifying a variety of intracellular compartments in eukaryotic cells, thus providing most of the energy required for transport processes in the vacuolar system. The chain is V-type proton ATPase subunit d2 (VHA-d2) from Arabidopsis thaliana (Mouse-ear cress).